Reading from the N-terminus, the 240-residue chain is ATP-dependent dethiobiotin synthetase BioD (240 aa).

Residue 13-18 (EVGKTV) participates in ATP binding. T17 lines the Mg(2+) pocket. K38 is a catalytic residue. S42 is a substrate binding site. ATP is bound by residues D55, 116–119 (EGAG), 176–177 (ND), and 205–207 (PWL). Mg(2+) is bound by residues D55 and E116.

It belongs to the dethiobiotin synthetase family. As to quaternary structure, homodimer. Requires Mg(2+) as cofactor.

The protein localises to the cytoplasm. The catalysed reaction is (7R,8S)-7,8-diammoniononanoate + CO2 + ATP = (4R,5S)-dethiobiotin + ADP + phosphate + 3 H(+). Its pathway is cofactor biosynthesis; biotin biosynthesis; biotin from 7,8-diaminononanoate: step 1/2. Catalyzes a mechanistically unusual reaction, the ATP-dependent insertion of CO2 between the N7 and N8 nitrogen atoms of 7,8-diaminopelargonic acid (DAPA, also called 7,8-diammoniononanoate) to form a ureido ring. In Pseudescherichia vulneris (Escherichia vulneris), this protein is ATP-dependent dethiobiotin synthetase BioD.